The sequence spans 205 residues: Large ribosomal subunit protein bL21 (205 aa).

Residues 107–137 (APAKKAAAKKEEAPKADTAPKAAAAPTEEAA) are disordered. Residues 122–137 (ADTAPKAAAAPTEEAA) show a composition bias toward low complexity.

It belongs to the bacterial ribosomal protein bL21 family. As to quaternary structure, part of the 50S ribosomal subunit. Contacts protein L20.

Functionally, this protein binds to 23S rRNA in the presence of protein L20. In Hyphomonas neptunium (strain ATCC 15444), this protein is Large ribosomal subunit protein bL21.